Here is a 175-residue protein sequence, read N- to C-terminus: MMTYIVFILSIIFVMGFVGFSSKPSPIYGGLGLIVSGGVGCGIVLNFGGSFLGLMVFLIYLGGMMVVFGYTTAMATEQYPEVWVSNKVVLGTFITGLLMEFLMVYYVLKDKEVEIVFKFNGMGDWVIYDTGDSGFFSEEAMGIAALYSYGTWLVIVTGWSLLIGVVVIMEITRGN.

The next 5 helical transmembrane spans lie at 1 to 21 (MMTY…VGFS), 25 to 45 (SPIY…GIVL), 47 to 67 (FGGS…MMVV), 88 to 108 (VVLG…YYVL), and 149 to 169 (YGTW…VVIM).

Belongs to the complex I subunit 6 family. As to quaternary structure, core subunit of respiratory chain NADH dehydrogenase (Complex I) which is composed of 45 different subunits.

The protein localises to the mitochondrion inner membrane. It carries out the reaction a ubiquinone + NADH + 5 H(+)(in) = a ubiquinol + NAD(+) + 4 H(+)(out). Core subunit of the mitochondrial membrane respiratory chain NADH dehydrogenase (Complex I) which catalyzes electron transfer from NADH through the respiratory chain, using ubiquinone as an electron acceptor. Essential for the catalytic activity and assembly of complex I. This is NADH-ubiquinone oxidoreductase chain 6 (MT-ND6) from Ovis aries (Sheep).